Reading from the N-terminus, the 586-residue chain is Germ cell nuclear acidic protein (586 aa).

Disordered regions lie at residues 17 to 119 (GWDR…LSSE), 176 to 202 (KAKT…SPVF), 217 to 266 (TWRT…SSEE), and 279 to 318 (LGGR…PVKD). Positions 65–76 (SGKENRSQEEHI) are enriched in basic and acidic residues. Over residues 94–107 (TPKSTFKQSASSAQ) the composition is skewed to polar residues. Over residues 176–191 (KAKTVKTPKSVQKTKK) the composition is skewed to basic residues. Residues 225 to 244 (PPSDEHQATSKDREETEKPR) show a composition bias toward basic and acidic residues. Residues 299-313 (CLSTPSATGRKTGSQ) show a composition bias toward polar residues. One can recognise a SprT-like domain in the interval 383–482 (KLYQLYNTSV…LYARKAMLAH (100 aa)).

It belongs to the serine-aspartate repeat-containing protein (SDr) family.

The protein localises to the nucleus. Its subcellular location is the PML body. The protein resides in the chromosome. Its function is as follows. May play a role in DNA-protein cross-links (DPCs) clearance, ensuring the genomic stability by protecting germ cells and early embryos from various sources of damage. In Danio rerio (Zebrafish), this protein is Germ cell nuclear acidic protein (gcna).